The chain runs to 131 residues: Protein ApaG (131 aa).

An ApaG domain is found at 7 to 131; it reads PVKPYDLTVS…FLLAMPRTLH (125 aa).

This is Protein ApaG from Bordetella bronchiseptica (strain ATCC BAA-588 / NCTC 13252 / RB50) (Alcaligenes bronchisepticus).